Here is a 168-residue protein sequence, read N- to C-terminus: MLPARLRTFFLPACLVALAVLVASFRLENTVGLMPCPLCLSQRLLLGGYALLCFAAVLQAPGTRGILRYARLALGCSLAGALLAARHVWLQGAEGVNEVCPVPIGRVFEQSWSEAARQLLLGGPDCRSLAWSFLDLTLPEWSLLAFLLLAVLPLSCLLAYRFRTLART.

Over 1–9 (MLPARLRTF) the chain is Cytoplasmic. The chain crosses the membrane as a helical span at residues 10 to 26 (FLPACLVALAVLVASFR). At 27-44 (LENTVGLMPCPLCLSQRL) the chain is on the periplasmic side. A disulfide bond links C36 and C39. Residues 45 to 61 (LLGGYALLCFAAVLQAP) form a helical membrane-spanning segment. Over 62 to 67 (GTRGIL) the chain is Cytoplasmic. A helical membrane pass occupies residues 68 to 85 (RYARLALGCSLAGALLAA). The Periplasmic portion of the chain corresponds to 86–140 (RHVWLQGAEGVNEVCPVPIGRVFEQSWSEAARQLLLGGPDCRSLAWSFLDLTLPE). C100 and C126 are oxidised to a cystine. The helical transmembrane segment at 141-159 (WSLLAFLLLAVLPLSCLLA) threads the bilayer. The Cytoplasmic portion of the chain corresponds to 160-168 (YRFRTLART).

The protein belongs to the DsbB family.

Its subcellular location is the cell inner membrane. Required for disulfide bond formation in some periplasmic proteins. Acts by oxidizing the DsbA protein. The polypeptide is Disulfide bond formation protein B 2 (dsbB2) (Pseudomonas putida (strain ATCC 47054 / DSM 6125 / CFBP 8728 / NCIMB 11950 / KT2440)).